The sequence spans 247 residues: tRNA (guanine-N(1)-)-methyltransferase (247 aa).

S-adenosyl-L-methionine contacts are provided by residues Gly112 and 131-136; that span reads LGDFVL.

This sequence belongs to the RNA methyltransferase TrmD family. As to quaternary structure, homodimer.

Its subcellular location is the cytoplasm. It carries out the reaction guanosine(37) in tRNA + S-adenosyl-L-methionine = N(1)-methylguanosine(37) in tRNA + S-adenosyl-L-homocysteine + H(+). Its function is as follows. Specifically methylates guanosine-37 in various tRNAs. The chain is tRNA (guanine-N(1)-)-methyltransferase from Syntrophotalea carbinolica (strain DSM 2380 / NBRC 103641 / GraBd1) (Pelobacter carbinolicus).